Consider the following 136-residue polypeptide: Putative LysR family substrate binding domain-containing protein YagP (136 aa).

This sequence belongs to the LysR transcriptional regulatory family.

This Escherichia coli (strain K12) protein is Putative LysR family substrate binding domain-containing protein YagP (yagP).